The following is a 314-amino-acid chain: Epithelial-stromal interaction protein 1 (314 aa).

Disordered stretches follow at residues 1-72 (MYPR…PNET), 200-219 (NRSACNIAPPAAQSSRWKLP), 225-267 (PSRA…HQEE), and 292-314 (SQPGGVEQSGGCWNMNSTDGWGI). Residues 43 to 58 (AEPKGPKLERQGHGDQ) show a composition bias toward basic and acidic residues. A coiled-coil region spans residues 71-180 (ETRRQKIQRI…QEDIRRATLR (110 aa)). Basic and acidic residues predominate over residues 232-267 (AHKDSPQKEDNQKLQKTRDGHQKNKLLETKGQHQEE). The span at 305 to 314 (NMNSTDGWGI) shows a compositional bias: polar residues.

Its function is as follows. Plays a role in M1 macrophage polarization and is required for the proper regulation of gene expression during M1 versus M2 macrophage differentiation. Might play a role in RELA/p65 and STAT1 phosphorylation and nuclear localization upon activation of macrophages. The polypeptide is Epithelial-stromal interaction protein 1 (Epsti1) (Rattus norvegicus (Rat)).